The following is a 1032-amino-acid chain: MEGARLQAVVTANIREFQRKMAAVNRIVRTTANRVTVTVDSRTEKFENAMNRLARITGSLSTVIGGALRGALMSAFPAAVPAAASLVGVVGSLGPMLGVAAGGAAGLGSAFATAGAGAVAYGALAATSIGGVIKASQDLDKLQAKLDDATDAKERAKIMEQIKNLQASLGKEERKALDTLEDFKSNWQDIAKSVQKPILRTFTTSLNTFKSVLNQLQPMFRGLARGGESLAKSMQNAFKAPDMKNFINYLNTEAPGAFVSFGKISGNIIRTVMNLMVAFGPLGKNMTKSIEGATAAWVKWSASLGSSVKFQKFIAYVQTNGPKLLKIIGNLSSGITSLFTGFAPLSADMMTSLVNLTARFKEWAASAKDSKEFKSFIDYIRTNGPIVWDSLGKIAKTLINLAVAMAPVGSEVLKMVNSFAQWTAATTKAHPEIGKFMAVAISLGGALRALTPVIISFQTLFGGFSSIGKAIDLIKKFKTSAAGIKLAAAIADMKLFTKTNALMAAQMAKTKFTNMITQLGLFGTKLRLQMSIMAAYLKQLVVAAAQQTAFAVKMAASYAQMKITSFITALKNGIIQMGLWIKNMAIMAAQSAANAVKMAAAWTAARISAFASMLAAGIKQMIAFGVRLAALAAAAAANAARMAASWVIAMGPIGWITAAVIALVALIIANWDKIKEYTVKIWGAVSKWLSDAWNKIKQAASVVWQALVTLIKKNFEMQKKIVTTVWNTIKSVSSKVWNGIKSFLSSVWNGIVNAGKTVWNGLKTFFTAWLNFQKKTWSTIWNAVKTAVTKVWKGIVSVGKTVWNGLKSFFTSWLNGQKKLFSTVWNAVKTAVTNVWNKLKSAASSTFNALKSSVTNIMNKVKDKIKSIWNSVMSFFKGINLGSIGRNIMQGLINGVTSMWGRVTSTFSRLTNAIPKTIKKILGIHSPSRLMRDEIGYHIGTGLVKGITGTEGMVTKAAASLAKSAVPEVPTVPELAVNSSYSGGMVEQSVNASLENFDLPEKNIIIQMDKREVGRAVEEPVREFTGRKRKRR.

Residues 131 to 178 (GVIKASQDLDKLQAKLDDATDAKERAKIMEQIKNLQASLGKEERKALD) adopt a coiled-coil conformation.

It localises to the virion. Serves as a base for tail tube protein polymerization and acts as a template for tail length determination. This chain is Tail tape measure protein gp18, found in Bacillus phage SPP1 (Bacteriophage SPP1).